We begin with the raw amino-acid sequence, 271 residues long: Cytochrome b termination protein 1 (271 aa).

It localises to the mitochondrion. Functionally, involved in 5'-end processing of mitochondrial COB, 15S rRNA, and RPM1 transcript. May also have a role in 3'-end processing of the COB pre-mRNA. This is Cytochrome b termination protein 1 (CBT1) from Saccharomyces cerevisiae (strain ATCC 204508 / S288c) (Baker's yeast).